Reading from the N-terminus, the 1758-residue chain is Y' element ATP-dependent helicase YJL225C (1758 aa).

Residues 668–845 (EIYMADTPSV…LQRIGLTGLA (178 aa)) enclose the Helicase ATP-binding domain. 681–688 (APPGYGKT) contributes to the ATP binding site. The region spanning 900-1051 (ALKLLLALFE…EFYGLESKKG (152 aa)) is the Helicase C-terminal domain. The segment covering 1142-1360 (NVRTNATTNA…ATTTESTNAS (219 aa)) has biased composition (low complexity). A disordered region spans residues 1142–1384 (NVRTNATTNA…RFHPVTDINK (243 aa)). The segment covering 1361–1384 (AKEDANKDGNAEDNRFHPVTDINK) has biased composition (basic and acidic residues).

This sequence belongs to the helicase family. Yeast subtelomeric Y' repeat subfamily.

In terms of biological role, catalyzes DNA unwinding and is involved in telomerase-independent telomere maintenance. The protein is Y' element ATP-dependent helicase YJL225C of Saccharomyces cerevisiae (strain ATCC 204508 / S288c) (Baker's yeast).